Here is a 251-residue protein sequence, read N- to C-terminus: Probable transcriptional regulatory protein Francci3_1368 (251 aa).

It belongs to the TACO1 family.

The protein localises to the cytoplasm. The polypeptide is Probable transcriptional regulatory protein Francci3_1368 (Frankia casuarinae (strain DSM 45818 / CECT 9043 / HFP020203 / CcI3)).